Reading from the N-terminus, the 264-residue chain is Thymidylate synthase (264 aa).

A dUMP-binding site is contributed by arginine 21. Residue histidine 51 participates in (6R)-5,10-methylene-5,6,7,8-tetrahydrofolate binding. 126–127 (RR) provides a ligand contact to dUMP. The Nucleophile role is filled by cysteine 146. Residues 166-169 (RSAD), asparagine 177, and 207-209 (HLY) each bind dUMP. Residue aspartate 169 coordinates (6R)-5,10-methylene-5,6,7,8-tetrahydrofolate. Alanine 263 provides a ligand contact to (6R)-5,10-methylene-5,6,7,8-tetrahydrofolate.

The protein belongs to the thymidylate synthase family. Bacterial-type ThyA subfamily. Homodimer.

Its subcellular location is the cytoplasm. It carries out the reaction dUMP + (6R)-5,10-methylene-5,6,7,8-tetrahydrofolate = 7,8-dihydrofolate + dTMP. It participates in pyrimidine metabolism; dTTP biosynthesis. Functionally, catalyzes the reductive methylation of 2'-deoxyuridine-5'-monophosphate (dUMP) to 2'-deoxythymidine-5'-monophosphate (dTMP) while utilizing 5,10-methylenetetrahydrofolate (mTHF) as the methyl donor and reductant in the reaction, yielding dihydrofolate (DHF) as a by-product. This enzymatic reaction provides an intracellular de novo source of dTMP, an essential precursor for DNA biosynthesis. This Aromatoleum aromaticum (strain DSM 19018 / LMG 30748 / EbN1) (Azoarcus sp. (strain EbN1)) protein is Thymidylate synthase.